The following is a 428-amino-acid chain: Cytochrome P450-terp (428 aa).

Residue Cys377 coordinates heme.

The protein belongs to the cytochrome P450 family. Requires heme as cofactor.

It is found in the cytoplasm. In terms of biological role, catalyzes the hydroxylation of alpha-terpineol. The polypeptide is Cytochrome P450-terp (cyp108) (Pseudomonas sp).